The primary structure comprises 122 residues: Prefoldin subunit 1 (122 aa).

It belongs to the prefoldin subunit beta family. Heterohexamer of two PFD-alpha type and four PFD-beta type subunits.

Binds specifically to cytosolic chaperonin (c-CPN) and transfers target proteins to it. Binds to nascent polypeptide chain and promotes folding in an environment in which there are many competing pathways for nonnative proteins. The sequence is that of Prefoldin subunit 1 (pfdn1) from Danio rerio (Zebrafish).